We begin with the raw amino-acid sequence, 282 residues long: Glutamate--LysW ligase ArgX (282 aa).

Residues Lys-87, Lys-127, 131–137 (GSWGRLV), and 167–178 (QEYIQYKGRDIR) each bind ATP. An ATP-grasp domain is found at 91-277 (YSKLYREGIP…VAQKLVEYIK (187 aa)). Arg-192 serves as a coordination point for substrate. ATP is bound at residue Asn-202. 203–204 (VA) provides a ligand contact to substrate. Residues Asp-237, Glu-250, and Asn-252 each contribute to the Mg(2+) site. Residue 256-260 (EFKGF) coordinates substrate. Positions 259-260 (GF) match the GF motif that is essential for ArgX substrate specificity motif.

This sequence belongs to the RimK family. LysX subfamily. Homotetramer. Interacts with LysW. The cofactor is Mg(2+).

It carries out the reaction [amino-group carrier protein]-C-terminal-L-glutamate + L-glutamate + ATP = [amino-group carrier protein]-C-terminal-gamma-(L-glutamyl)-L-glutamate + ADP + phosphate + H(+). It participates in amino-acid biosynthesis; L-arginine biosynthesis. In terms of biological role, catalyzes the ATP-dependent formation of a covalent bond between the amino group of glutamate and the gamma-carboxyl group of the C-terminal glutamate residue in LysW. This is Glutamate--LysW ligase ArgX from Sulfurisphaera tokodaii (strain DSM 16993 / JCM 10545 / NBRC 100140 / 7) (Sulfolobus tokodaii).